Here is a 359-residue protein sequence, read N- to C-terminus: tRNA N6-adenosine threonylcarbamoyltransferase (359 aa).

Fe cation is bound by residues histidine 115 and histidine 119. Substrate-binding positions include 137-141 (LVSGG), aspartate 170, glycine 183, and asparagine 283. Aspartate 311 is a Fe cation binding site. The tract at residues 328–359 (APDSLDIAPRSRWPLDEKSAPVFGTGRRGAKA) is disordered.

It belongs to the KAE1 / TsaD family. The cofactor is Fe(2+).

The protein localises to the cytoplasm. The catalysed reaction is L-threonylcarbamoyladenylate + adenosine(37) in tRNA = N(6)-L-threonylcarbamoyladenosine(37) in tRNA + AMP + H(+). Functionally, required for the formation of a threonylcarbamoyl group on adenosine at position 37 (t(6)A37) in tRNAs that read codons beginning with adenine. Is involved in the transfer of the threonylcarbamoyl moiety of threonylcarbamoyl-AMP (TC-AMP) to the N6 group of A37, together with TsaE and TsaB. TsaD likely plays a direct catalytic role in this reaction. This is tRNA N6-adenosine threonylcarbamoyltransferase from Brucella canis (strain ATCC 23365 / NCTC 10854 / RM-666).